A 144-amino-acid polypeptide reads, in one-letter code: UPF0178 protein Exig_1155 (144 aa).

A disordered region spans residues 110-144 (IRRAGGRTKGPKKRTRQEDASFEQSFSRLLTEKTD). Basic residues predominate over residues 113–124 (AGGRTKGPKKRT).

It belongs to the UPF0178 family.

This chain is UPF0178 protein Exig_1155, found in Exiguobacterium sibiricum (strain DSM 17290 / CCUG 55495 / CIP 109462 / JCM 13490 / 255-15).